Reading from the N-terminus, the 137-residue chain is Methylglyoxal synthase (137 aa).

The region spanning 1 to 137 (MKIALIAHDK…NLVRGGEPNV (137 aa)) is the MGS-like domain. Substrate is bound by residues His-8, Lys-12, 34–37 (TGTT), and 54–55 (SG). The active-site Proton donor/acceptor is Asp-60. His-87 is a binding site for substrate.

It belongs to the methylglyoxal synthase family.

The enzyme catalyses dihydroxyacetone phosphate = methylglyoxal + phosphate. Its function is as follows. Catalyzes the formation of methylglyoxal from dihydroxyacetone phosphate. This is Methylglyoxal synthase from Bacillus velezensis (strain DSM 23117 / BGSC 10A6 / LMG 26770 / FZB42) (Bacillus amyloliquefaciens subsp. plantarum).